Here is a 99-residue protein sequence, read N- to C-terminus: A-type ATP synthase subunit F (99 aa).

The protein belongs to the V-ATPase F subunit family. Has multiple subunits with at least A(3), B(3), C, D, E, F, H, I and proteolipid K(x).

Its subcellular location is the cell membrane. Component of the A-type ATP synthase that produces ATP from ADP in the presence of a proton gradient across the membrane. In Methanococcus aeolicus (strain ATCC BAA-1280 / DSM 17508 / OCM 812 / Nankai-3), this protein is A-type ATP synthase subunit F.